The following is a 210-amino-acid chain: Thymidylate kinase (210 aa).

10–17 contacts ATP; it reads GPEGAGKS.

It belongs to the thymidylate kinase family.

The catalysed reaction is dTMP + ATP = dTDP + ADP. Its function is as follows. Phosphorylation of dTMP to form dTDP in both de novo and salvage pathways of dTTP synthesis. In Pseudomonas savastanoi pv. phaseolicola (strain 1448A / Race 6) (Pseudomonas syringae pv. phaseolicola (strain 1448A / Race 6)), this protein is Thymidylate kinase.